The chain runs to 63 residues: uncharacterized protein (63 aa).

The chain crosses the membrane as a helical span at residues 3–23; it reads IIYIILGFLSLAIGIIGIFPS.

It is found in the membrane. This is an uncharacterized protein from Haemophilus influenzae (strain ATCC 51907 / DSM 11121 / KW20 / Rd).